A 341-amino-acid polypeptide reads, in one-letter code: MSLWLEHFLTGYFQLCGLVCGWSGSRLGRLLSSTFLVLILIELVGEIETYFTEENPDNESVPAYFAKVIMGVNMAYKMIHAWIALSALFECRRFRYLLEELPPVKATSFIYRHLILEIILFACNAFLVLSEYTIRGIYLENLRYAYSLQAVRARYLQMMVLVDRLDGKLEQLHHRVISGSSDYKTLRLDYAHLAKVTRSLSHLFGLSLLLLNVLCLGDWIIVCNVYFMVAYLQVLPATLFLFGQVMFVVCPTLIKIWSICAASHRCVSKSKHLQQQLKDLPGQTPVERSQIEGFALQIMQDPIQIDVCGIYHLNLQTLAGMFFFILEALVIFLQFVSLVRT.

Residue M1 is a topological domain, cytoplasmic. A helical transmembrane segment spans residues S2–W22. Residues S23–L30 lie on the Extracellular side of the membrane. Residues L31–F51 form a helical membrane-spanning segment. The Cytoplasmic portion of the chain corresponds to T52–V68. Residues I69–F89 traverse the membrane as a helical segment. Residues E90 to H113 are Extracellular-facing. A helical membrane pass occupies residues L114 to I134. At R135–H202 the chain is on the cytoplasmic side. The chain crosses the membrane as a helical span at residues L203 to C223. The Extracellular segment spans residues N224–Q233. The chain crosses the membrane as a helical span at residues V234–I254. The Cytoplasmic portion of the chain corresponds to K255–L318. Residues A319–V339 traverse the membrane as a helical segment. The Extracellular segment spans residues R340–T341.

It belongs to the insect chemoreceptor superfamily. Gustatory receptor (GR) family. Gr2a subfamily. Expressed in neurons of the terminal external chemosensory organ of larvae.

It localises to the cell membrane. Probable gustatory receptor which mediates acceptance or avoidance behavior, depending on its substrates. The protein is Putative gustatory receptor 9a (Gr9a) of Drosophila melanogaster (Fruit fly).